The sequence spans 354 residues: NADH-quinone oxidoreductase subunit H (354 aa).

8 helical membrane-spanning segments follow: residues 25 to 45, 91 to 111, 126 to 146, 170 to 190, 205 to 225, 267 to 287, 290 to 310, and 330 to 350; these read LVRILVVAVVILLCVAYLILW, WIYLIAPIMVVVPAFAVWAVI, LLYAMAISSIGVYGVILAGWA, MGFALVVVLMTAGTLNLSGIV, FLSWNWLPLLPMFVVYFISGI, IVISALAATLFLGGWSAPFGF, FVPGIVWLVAKVFLLLSVFIW, and IFIPVCVVWLVVVGFWIMSPL.

Belongs to the complex I subunit 1 family. As to quaternary structure, NDH-1 is composed of 14 different subunits. Subunits NuoA, H, J, K, L, M, N constitute the membrane sector of the complex.

Its subcellular location is the cell inner membrane. It catalyses the reaction a quinone + NADH + 5 H(+)(in) = a quinol + NAD(+) + 4 H(+)(out). In terms of biological role, NDH-1 shuttles electrons from NADH, via FMN and iron-sulfur (Fe-S) centers, to quinones in the respiratory chain. The immediate electron acceptor for the enzyme in this species is believed to be ubiquinone. Couples the redox reaction to proton translocation (for every two electrons transferred, four hydrogen ions are translocated across the cytoplasmic membrane), and thus conserves the redox energy in a proton gradient. This subunit may bind ubiquinone. The polypeptide is NADH-quinone oxidoreductase subunit H (Paraburkholderia phytofirmans (strain DSM 17436 / LMG 22146 / PsJN) (Burkholderia phytofirmans)).